The sequence spans 98 residues: N(2)-fixation sustaining protein CowN (98 aa).

The protein belongs to the CowN family.

Its function is as follows. Is required to sustain N(2)-dependent growth in the presence of low levels of carbon monoxide (CO). Probably acts by protecting the N(2) fixation ability of the nitrogenase complex, which is inactivated in the presence of CO. In Dechloromonas aromatica (strain RCB), this protein is N(2)-fixation sustaining protein CowN.